The following is a 237-amino-acid chain: Ubiquinone biosynthesis O-methyltransferase (237 aa).

Arg-38, Gly-57, Asp-78, and Met-122 together coordinate S-adenosyl-L-methionine.

This sequence belongs to the methyltransferase superfamily. UbiG/COQ3 family.

The catalysed reaction is a 3-demethylubiquinol + S-adenosyl-L-methionine = a ubiquinol + S-adenosyl-L-homocysteine + H(+). It carries out the reaction a 3-(all-trans-polyprenyl)benzene-1,2-diol + S-adenosyl-L-methionine = a 2-methoxy-6-(all-trans-polyprenyl)phenol + S-adenosyl-L-homocysteine + H(+). The protein operates within cofactor biosynthesis; ubiquinone biosynthesis. In terms of biological role, O-methyltransferase that catalyzes the 2 O-methylation steps in the ubiquinone biosynthetic pathway. This Methylococcus capsulatus (strain ATCC 33009 / NCIMB 11132 / Bath) protein is Ubiquinone biosynthesis O-methyltransferase.